The sequence spans 358 residues: uncharacterized protein (358 aa).

29–36 (GPINSGKT) is an ATP binding site.

It belongs to the archaeal ATPase family.

This is an uncharacterized protein from Methanocaldococcus jannaschii (strain ATCC 43067 / DSM 2661 / JAL-1 / JCM 10045 / NBRC 100440) (Methanococcus jannaschii).